The sequence spans 315 residues: Methionyl-tRNA formyltransferase (315 aa).

Residue 115 to 118 (SLLP) participates in (6S)-5,6,7,8-tetrahydrofolate binding.

The protein belongs to the Fmt family.

It carries out the reaction L-methionyl-tRNA(fMet) + (6R)-10-formyltetrahydrofolate = N-formyl-L-methionyl-tRNA(fMet) + (6S)-5,6,7,8-tetrahydrofolate + H(+). In terms of biological role, attaches a formyl group to the free amino group of methionyl-tRNA(fMet). The formyl group appears to play a dual role in the initiator identity of N-formylmethionyl-tRNA by promoting its recognition by IF2 and preventing the misappropriation of this tRNA by the elongation apparatus. In Dehalococcoides mccartyi (strain ATCC BAA-2100 / JCM 16839 / KCTC 5957 / BAV1), this protein is Methionyl-tRNA formyltransferase.